The following is a 499-amino-acid chain: Alpha-internexin (499 aa).

Positions Met-1–Tyr-87 are head. The residue at position 72 (Ser-72) is a Phosphoserine. Positions Lys-88–Leu-129 are coil 1A. Residues Glu-94–Phe-407 enclose the IF rod domain. The segment at Arg-130–Leu-142 is linker 1. The segment at Phe-143–Leu-238 is coil 1B. Ser-219 carries the phosphoserine modification. The tract at residues Leu-239–Thr-262 is linker 2. Positions Ser-263–Ser-408 are coil 2. Lys-290 carries the post-translational modification N6-acetyllysine. Ser-335 is subject to Phosphoserine. Residues Thr-409–Ile-499 form a tail region. Residues Ser-441–Ile-466 form a disordered region. Phosphoserine occurs at positions 469 and 496.

This sequence belongs to the intermediate filament family. In terms of assembly, forms homodimers (in vitro). Forms heterodimers with NEFL, NEFM or NEFH (in vitro). In terms of processing, O-glycosylated. In terms of tissue distribution, found predominantly in adult CNS.

Functionally, class-IV neuronal intermediate filament that is able to self-assemble. It is involved in the morphogenesis of neurons. It may form an independent structural network without the involvement of other neurofilaments or it may cooperate with NEFL to form the filamentous backbone to which NEFM and NEFH attach to form the cross-bridges. May also cooperate with the neuronal intermediate filament protein PRPH to form filamentous networks. In Homo sapiens (Human), this protein is Alpha-internexin (INA).